The chain runs to 308 residues: tRNA pseudouridine synthase B (308 aa).

The active-site Nucleophile is Asp-37.

The protein belongs to the pseudouridine synthase TruB family. Type 1 subfamily.

The enzyme catalyses uridine(55) in tRNA = pseudouridine(55) in tRNA. In terms of biological role, responsible for synthesis of pseudouridine from uracil-55 in the psi GC loop of transfer RNAs. This is tRNA pseudouridine synthase B from Deinococcus radiodurans (strain ATCC 13939 / DSM 20539 / JCM 16871 / CCUG 27074 / LMG 4051 / NBRC 15346 / NCIMB 9279 / VKM B-1422 / R1).